Reading from the N-terminus, the 101-residue chain is Small nuclear ribonucleoprotein Sm D3 (101 aa).

The region spanning isoleucine 6–leucine 78 is the Sm domain.

Belongs to the snRNP core protein family. As to quaternary structure, component of the Sm core complex, present in spliceosomal snRNP U1, U2, U4/U6 and U5. The core complex contains SMB1, SMD1, SMD2, SMD3, SME1, SMX3 and SMX2 (Sm proteins B, D1, D2, D3, E, F and G, respectively), and is probably a heptameric ring structure. SMD3 specifically interacts with SMB1. Belongs to the CWC complex (or CEF1-associated complex), a spliceosome sub-complex reminiscent of a late-stage spliceosome composed of the U2, U5 and U6 snRNAs and at least BUD13, BUD31, BRR2, CDC40, CEF1, CLF1, CUS1, CWC2, CWC15, CWC21, CWC22, CWC23, CWC24, CWC25, CWC27, ECM2, HSH155, IST3, ISY1, LEA1, MSL1, NTC20, PRP8, PRP9, PRP11, PRP19, PRP21, PRP22, PRP45, PRP46, SLU7, SMB1, SMD1, SMD2, SMD3, SMX2, SMX3, SNT309, SNU114, SPP2, SYF1, SYF2, RSE1 and YJU2. Component of the U4/U6-U5 tri-snRNP complex composed of the U4, U6 and U5 snRNAs and at least PRP3, PRP4, PRP6, PRP8, PRP18, PRP31, PRP38, SNU13, SNU23, SNU66, SNU114, SPP381, SMB1, SMD1, SMD2, SMD3, SMX2, SMX3, LSM2, LSM3, LSM4, LSM5, LSM6, LSM7, LSM8, BRR2 and DIB1.

Its subcellular location is the cytoplasm. The protein resides in the cytosol. It localises to the nucleus. Its function is as follows. Plays a role in pre-mRNA splicing as a core component of the spliceosomal U1, U2, U4 and U5 small nuclear ribonucleoproteins (snRNPs), the building blocks of the spliceosome. Also binds telomerase RNA and is required for its accumulation. This chain is Small nuclear ribonucleoprotein Sm D3 (SMD3), found in Saccharomyces cerevisiae (strain ATCC 204508 / S288c) (Baker's yeast).